The following is a 159-amino-acid chain: Membrane protein FAM174B (159 aa).

The N-terminal stretch at 1–27 is a signal peptide; sequence MRAALPPARLLPLLLLLALLGAPAARA. The disordered stretch occupies residues 28 to 73; that stretch reads SRAQSAAPPQPGAERQPRPPPGPGPGNATGTGSGEAAGGGGSSNSS. Residues 28–90 are Extracellular-facing; the sequence is SRAQSAAPPQ…ISSLLRDLHT (63 aa). Positions 52–69 are enriched in gly residues; sequence PGNATGTGSGEAAGGGGS. An N-linked (GlcNAc...) asparagine glycan is attached at Asn-54. Residues 91-111 traverse the membrane as a helical segment; sequence LKAAVIVACAFTAFLIACLLL. At 112 to 159 the chain is on the cytoplasmic side; it reads RVFRSGKRLKKTRKYDIITTPAERVEMAPLNEEDDEDEDSTVFDIKYR.

Belongs to the FAM174 family.

The protein localises to the cell membrane. It is found in the golgi apparatus. In terms of biological role, essential for Golgi structural integrity. The polypeptide is Membrane protein FAM174B (FAM174B) (Bos taurus (Bovine)).